The following is a 404-amino-acid chain: Cytoplasmic tRNA 2-thiolation protein 2 (404 aa).

Belongs to the CTU2/NCS2 family.

The protein resides in the cytoplasm. It participates in tRNA modification; 5-methoxycarbonylmethyl-2-thiouridine-tRNA biosynthesis. Plays a central role in 2-thiolation of mcm(5)S(2)U at tRNA wobble positions of tRNA(Lys), tRNA(Glu) and tRNA(Gln). May act by forming a heterodimer with NCS6/CTU1 that ligates sulfur from thiocarboxylated URM1 onto the uridine of tRNAs at wobble position. This chain is Cytoplasmic tRNA 2-thiolation protein 2, found in Drosophila erecta (Fruit fly).